A 95-amino-acid polypeptide reads, in one-letter code: Large ribosomal subunit protein eL42 (95 aa).

4 residues coordinate Zn(2+): cysteine 11, cysteine 14, cysteine 71, and cysteine 74. The segment at 11–74 (CPRCNTHTEH…QVLVITCTVC (64 aa)) adopts a C4-type zinc-finger fold.

This sequence belongs to the eukaryotic ribosomal protein eL42 family. As to quaternary structure, part of the 50S ribosomal subunit. Zn(2+) is required as a cofactor.

Its function is as follows. Binds to the 23S rRNA. The polypeptide is Large ribosomal subunit protein eL42 (Aeropyrum pernix (strain ATCC 700893 / DSM 11879 / JCM 9820 / NBRC 100138 / K1)).